Here is a 135-residue protein sequence, read N- to C-terminus: Class I hydrophobin 15 (135 aa).

The first 21 residues, 1 to 21 (MFAKSATIAIVLAALAGFSAA), serve as a signal peptide directing secretion. 4 disulfide bridges follow: Cys50/Cys113, Cys57/Cys107, Cys58/Cys97, and Cys114/Cys127. Residue Asn131 is glycosylated (N-linked (GlcNAc...) asparagine).

This sequence belongs to the fungal hydrophobin family. In terms of assembly, self-assembles to form functional amyloid fibrils called rodlets. Self-assembly into fibrillar rodlets occurs spontaneously at hydrophobic:hydrophilic interfaces and the rodlets further associate laterally to form amphipathic monolayers.

It localises to the secreted. The protein resides in the cell wall. Functionally, aerial growth, conidiation, and dispersal of filamentous fungi in the environment rely upon a capability of their secreting small amphipathic proteins called hydrophobins (HPBs) with low sequence identity. Class I can self-assemble into an outermost layer of rodlet bundles on aerial cell surfaces, conferring cellular hydrophobicity that supports fungal growth, development and dispersal; whereas Class II form highly ordered films at water-air interfaces through intermolecular interactions but contribute nothing to the rodlet structure. In Pleurotus ostreatus (strain PC15) (Oyster mushroom), this protein is Class I hydrophobin 15.